The chain runs to 96 residues: Co-chaperonin GroES (96 aa).

Belongs to the GroES chaperonin family. As to quaternary structure, heptamer of 7 subunits arranged in a ring. Interacts with the chaperonin GroEL.

It is found in the cytoplasm. Functionally, together with the chaperonin GroEL, plays an essential role in assisting protein folding. The GroEL-GroES system forms a nano-cage that allows encapsulation of the non-native substrate proteins and provides a physical environment optimized to promote and accelerate protein folding. GroES binds to the apical surface of the GroEL ring, thereby capping the opening of the GroEL channel. The chain is Co-chaperonin GroES from Leptospira interrogans serogroup Icterohaemorrhagiae serovar copenhageni (strain Fiocruz L1-130).